A 416-amino-acid polypeptide reads, in one-letter code: Gamma-glutamyl phosphate reductase (416 aa).

Belongs to the gamma-glutamyl phosphate reductase family.

Its subcellular location is the cytoplasm. The catalysed reaction is L-glutamate 5-semialdehyde + phosphate + NADP(+) = L-glutamyl 5-phosphate + NADPH + H(+). It participates in amino-acid biosynthesis; L-proline biosynthesis; L-glutamate 5-semialdehyde from L-glutamate: step 2/2. Functionally, catalyzes the NADPH-dependent reduction of L-glutamate 5-phosphate into L-glutamate 5-semialdehyde and phosphate. The product spontaneously undergoes cyclization to form 1-pyrroline-5-carboxylate. The chain is Gamma-glutamyl phosphate reductase from Salmonella heidelberg (strain SL476).